The chain runs to 307 residues: MGKIRVRNNNAASDAEVRNTVFKFNKDFGQHILKNPLVAQGIVDKADLKQSDTVLEVGPGTGNLTVRMLEKARKVIAVEMDPRMAAEITKRVQGTPKEKKLQVVLGDVIKTDLPYFDVCVSNTPYQISSPLVFKLLQQRPAPRAAILMFQREFALRLVARPGDPLYCRLSANVQMWAHVKHIMKVGKNNFRPPPLVESSVVRIEPKNPPPPLAFEEWDGLLRIVFLRKNKTIGACFKTSSIIEMVENNYRTWCSQNERMVEEDFDVKSLIDGVLQQCNLQDARASKCGQTEFLSLLHAFHQVGVHFA.

His31, Leu33, Gly58, Glu79, Asp107, and Asn122 together coordinate S-adenosyl-L-methionine.

This sequence belongs to the class I-like SAM-binding methyltransferase superfamily. rRNA adenine N(6)-methyltransferase family.

The enzyme catalyses adenosine(1779)/adenosine(1780) in 18S rRNA + 4 S-adenosyl-L-methionine = N(6)-dimethyladenosine(1779)/N(6)-dimethyladenosine(1780) in 18S rRNA + 4 S-adenosyl-L-homocysteine + 4 H(+). Functionally, specifically dimethylates two adjacent adenosines in the loop of a conserved hairpin near the 3'-end of 18S rRNA in the 40S particle. In Schizosaccharomyces pombe (strain 972 / ATCC 24843) (Fission yeast), this protein is Dimethyladenosine transferase (dim1).